Here is a 348-residue protein sequence, read N- to C-terminus: Dihydroorotase (348 aa).

Residues H17 and H19 each contribute to the Zn(2+) site. Substrate-binding positions include 19 to 21 (HLR) and N45. Residues K103, H140, and H178 each coordinate Zn(2+). N6-carboxylysine is present on K103. H140 lines the substrate pocket. A substrate-binding site is contributed by L223. D251 provides a ligand contact to Zn(2+). D251 is a catalytic residue. Substrate is bound by residues H255 and A267.

It belongs to the metallo-dependent hydrolases superfamily. DHOase family. Class II DHOase subfamily. Homodimer. Zn(2+) is required as a cofactor.

The enzyme catalyses (S)-dihydroorotate + H2O = N-carbamoyl-L-aspartate + H(+). It participates in pyrimidine metabolism; UMP biosynthesis via de novo pathway; (S)-dihydroorotate from bicarbonate: step 3/3. In terms of biological role, catalyzes the reversible cyclization of carbamoyl aspartate to dihydroorotate. This chain is Dihydroorotase, found in Cronobacter sakazakii (strain ATCC BAA-894) (Enterobacter sakazakii).